Reading from the N-terminus, the 460-residue chain is Cysteine--tRNA ligase (460 aa).

A Zn(2+)-binding site is contributed by Cys28. The 'HIGH' region motif lies at 30–40 (MTVYDYCHLGH). Zn(2+) contacts are provided by Cys209, His234, and Glu238. The 'KMSKS' region signature appears at 266 to 270 (KMSKS). Residue Lys269 participates in ATP binding.

The protein belongs to the class-I aminoacyl-tRNA synthetase family. As to quaternary structure, monomer. The cofactor is Zn(2+).

The protein localises to the cytoplasm. It catalyses the reaction tRNA(Cys) + L-cysteine + ATP = L-cysteinyl-tRNA(Cys) + AMP + diphosphate. This chain is Cysteine--tRNA ligase, found in Pseudomonas aeruginosa (strain UCBPP-PA14).